We begin with the raw amino-acid sequence, 219 residues long: ATP-dependent Clp protease proteolytic subunit 1, mitochondrial (219 aa).

The transit peptide at 1–23 (MLRRILTTSSVRNLTSSTQARVG) directs the protein to the mitochondrion. The Nucleophile role is filled by Ser118. Residue His143 is part of the active site.

The protein belongs to the peptidase S14 family. As to quaternary structure, tetradecamer that assembles into a two heptameric rings with a central cavity.

It localises to the mitochondrion matrix. The enzyme catalyses Hydrolysis of proteins to small peptides in the presence of ATP and magnesium. alpha-casein is the usual test substrate. In the absence of ATP, only oligopeptides shorter than five residues are hydrolyzed (such as succinyl-Leu-Tyr-|-NHMec, and Leu-Tyr-Leu-|-Tyr-Trp, in which cleavage of the -Tyr-|-Leu- and -Tyr-|-Trp bonds also occurs).. In terms of biological role, clp cleaves peptides in various proteins in a process that requires ATP hydrolysis. Clp may be responsible for a fairly general and central housekeeping function rather than for the degradation of specific substrates. In Caenorhabditis briggsae, this protein is ATP-dependent Clp protease proteolytic subunit 1, mitochondrial.